A 142-amino-acid polypeptide reads, in one-letter code: Ribosomal RNA large subunit methyltransferase H (142 aa).

L55 and G87 together coordinate S-adenosyl-L-methionine.

The protein belongs to the RNA methyltransferase RlmH family. Homodimer.

It is found in the cytoplasm. It catalyses the reaction pseudouridine(1915) in 23S rRNA + S-adenosyl-L-methionine = N(3)-methylpseudouridine(1915) in 23S rRNA + S-adenosyl-L-homocysteine + H(+). Specifically methylates the pseudouridine at position 1915 (m3Psi1915) in 23S rRNA. The polypeptide is Ribosomal RNA large subunit methyltransferase H (Sphingopyxis alaskensis (strain DSM 13593 / LMG 18877 / RB2256) (Sphingomonas alaskensis)).